We begin with the raw amino-acid sequence, 75 residues long: Large ribosomal subunit protein bL31 (75 aa).

Residues Cys16, Cys18, Cys38, and Cys41 each coordinate Zn(2+).

Belongs to the bacterial ribosomal protein bL31 family. Type A subfamily. As to quaternary structure, part of the 50S ribosomal subunit. The cofactor is Zn(2+).

Its function is as follows. Binds the 23S rRNA. The polypeptide is Large ribosomal subunit protein bL31 (Mycolicibacterium smegmatis (strain ATCC 700084 / mc(2)155) (Mycobacterium smegmatis)).